Here is a 354-residue protein sequence, read N- to C-terminus: DNA integrity scanning protein DisA (354 aa).

The DAC domain maps to 6–144 (GMKIKDTLKI…GDIKYVLRDS (139 aa)). Residues G73, L91, and 104–108 (TRHRT) each bind ATP.

This sequence belongs to the DisA family. As to quaternary structure, homooctamer. Requires Mg(2+) as cofactor.

The catalysed reaction is 2 ATP = 3',3'-c-di-AMP + 2 diphosphate. Functionally, participates in a DNA-damage check-point that is active prior to asymmetric division when DNA is damaged. DisA forms globular foci that rapidly scan along the chromosomes during sporulation, searching for lesions. When a lesion is present, DisA pauses at the lesion site. This triggers a cellular response that culminates in a temporary block in sporulation initiation. Its function is as follows. Also has diadenylate cyclase activity, catalyzing the condensation of 2 ATP molecules into cyclic di-AMP (c-di-AMP). c-di-AMP acts as a signaling molecule that couples DNA integrity with progression of sporulation. The rise in c-di-AMP level generated by DisA while scanning the chromosome, operates as a positive signal that advances sporulation; upon encountering a lesion, the DisA focus arrests at the damaged site and halts c-di-AMP synthesis. In Clostridium botulinum (strain Alaska E43 / Type E3), this protein is DNA integrity scanning protein DisA.